Reading from the N-terminus, the 331-residue chain is Glycerol-3-phosphate dehydrogenase [NAD(P)+] (331 aa).

Residues Ser11, Phe12, Arg32, and Lys106 each coordinate NADPH. Sn-glycerol 3-phosphate contacts are provided by Lys106, Gly134, and Ser136. An NADPH-binding site is contributed by Ala138. The sn-glycerol 3-phosphate site is built by Lys189, Asp242, Ser252, Arg253, and Asn254. Lys189 acts as the Proton acceptor in catalysis. Arg253 contacts NADPH. 2 residues coordinate NADPH: Val277 and Glu279.

This sequence belongs to the NAD-dependent glycerol-3-phosphate dehydrogenase family.

It is found in the cytoplasm. The catalysed reaction is sn-glycerol 3-phosphate + NAD(+) = dihydroxyacetone phosphate + NADH + H(+). It catalyses the reaction sn-glycerol 3-phosphate + NADP(+) = dihydroxyacetone phosphate + NADPH + H(+). It participates in membrane lipid metabolism; glycerophospholipid metabolism. In terms of biological role, catalyzes the reduction of the glycolytic intermediate dihydroxyacetone phosphate (DHAP) to sn-glycerol 3-phosphate (G3P), the key precursor for phospholipid synthesis. The polypeptide is Glycerol-3-phosphate dehydrogenase [NAD(P)+] (Clostridium perfringens (strain ATCC 13124 / DSM 756 / JCM 1290 / NCIMB 6125 / NCTC 8237 / Type A)).